Reading from the N-terminus, the 507-residue chain is Histidine ammonia-lyase (507 aa).

A cross-link (5-imidazolinone (Ala-Gly)) is located at residues 141-143 (ASG). Position 142 is a 2,3-didehydroalanine (Ser) (S142).

Belongs to the PAL/histidase family. In terms of processing, contains an active site 4-methylidene-imidazol-5-one (MIO), which is formed autocatalytically by cyclization and dehydration of residues Ala-Ser-Gly.

The protein localises to the cytoplasm. The catalysed reaction is L-histidine = trans-urocanate + NH4(+). The protein operates within amino-acid degradation; L-histidine degradation into L-glutamate; N-formimidoyl-L-glutamate from L-histidine: step 1/3. In Burkholderia pseudomallei (strain 668), this protein is Histidine ammonia-lyase.